We begin with the raw amino-acid sequence, 264 residues long: Virulence plasmid protein pGP3-D (264 aa).

This Chlamydia muridarum (strain MoPn / Nigg) protein is Virulence plasmid protein pGP3-D.